A 256-amino-acid polypeptide reads, in one-letter code: MEPTSSLNRGDRKKGSSLVTGSEVQSQSNGASCFITTDSEKSLVSRQASQVEQIELRTYVFLDSLQPQLAAYMGTVSRGFLPIPGDSCLWMEVSPGMAVHRVTDIALKASNVRLGQMIVERAFGSLALYHKDQSTVLHSGDVVLDAIGSEVRKRTKPSTSWTEVICAITPDHAVLINRQNRSGSMIQSGMSMFILETEPAGYVLKAANEAEKSANITIIDVKAVGAFGRLTLAGKEGDVEEAAAAAIRAIDQISNY.

A disordered region spans residues Met1–Val24. 2 consecutive BMC circularly permuted domains span residues Glu55–Pro157 and Ser158–Tyr256. Residues Glu120–Arg121 carry the Gates the pore motif.

It belongs to the EutL/PduB family. Homotrimer. Forms a dimer of stacked trimers, the same faces interact. A CsoS1-CsoS1D-CsoS2 complex can be isolated following expression in E.coli.

The protein resides in the carboxysome. Its function is as follows. Part of the carboxysome shell, a polyhedral inclusion where RuBisCO (ribulose bisphosphate carboxylase, cbbL-cbbS) is sequestered. It may control transport of RuBisCO reactants in and out of the carboxysome. There are estimated to be 6 CsoS1D hexamers per carboxysome. This Prochlorococcus marinus subsp. pastoris (strain CCMP1986 / NIES-2087 / MED4) protein is Carboxysome shell protein CsoS1D.